Consider the following 205-residue polypeptide: MANDTMIDSTQLRRSPAAHLAAAMEAAEVAGERAVTLREVAFTTQLGLRAVPGSTGHAALAAATGVGLPAAVGEVAGDVSGTAVLWLGPDEFLLAAEENPALLDTLQGALGQEPGQVLDLSANRSVLQLEGPAAALVLRKSCPADLHPREFGVNRAITTSLANIPVLLWRTGEQSWRILPRASFTEHTVHWLIDAMSEFSAAEVA.

This sequence belongs to the SoxG family. As to quaternary structure, heterotetramer composed of subunits alpha (SoxA), beta (SoxB), gamma (SoxG) and delta (SoxD).

It localises to the cytoplasm. It catalyses the reaction sarcosine + (6S)-5,6,7,8-tetrahydrofolate + O2 = (6R)-5,10-methylene-5,6,7,8-tetrahydrofolate + glycine + H2O2. The enzyme catalyses sarcosine + O2 + H2O = formaldehyde + glycine + H2O2. Inhibited by Zn(2+), Cu(2+), Cd(2+), Hg(2+), Ag(+), p-chloromercuribenzoate (p-CMB), iodoacetamide, N-ethylmaleimide, CN(-), o-phenanthroline and sodium lauryl sulfate. In the presence of tetrahydrofolate, catalyzes the oxidative demethylation of sarcosine to yield glycine, 5,10-methylenetetrahydrofolate and hydrogen peroxide. In the absence of tetrahydrofolate, catalyzes the oxidative demethylation of sarcosine to yield glycine, formaldehyde and hydrogen peroxide. Can also use N-methyl-L-alanine and N-ethyl-L-glycine. Is very specific for oxygen as an acceptor. The chain is Sarcosine oxidase subunit gamma from Corynebacterium sp. (strain U-96).